Reading from the N-terminus, the 168-residue chain is Putative B3 domain-containing protein Os10g0158600 (168 aa).

The segment at residues 4 to 97 is a DNA-binding region (TF-B3); sequence VVFASARLNA…KARVMLLNRQ (94 aa). Residues 105-151 are disordered; it reads KTPSTTSSDKNRSLSPSDQLTRASTSAHPSTSKSIPPLRNGTGSTKR. Polar residues predominate over residues 106 to 138; it reads TPSTTSSDKNRSLSPSDQLTRASTSAHPSTSKS.

The protein localises to the nucleus. The polypeptide is Putative B3 domain-containing protein Os10g0158600 (Oryza sativa subsp. japonica (Rice)).